The sequence spans 295 residues: Small ribosomal subunit protein uS2 (295 aa).

This sequence belongs to the universal ribosomal protein uS2 family.

The sequence is that of Small ribosomal subunit protein uS2 from Rickettsia typhi (strain ATCC VR-144 / Wilmington).